A 943-amino-acid chain; its full sequence is uncharacterized protein (943 aa).

Met1 carries the N-acetylmethionine modification. 5 disordered regions span residues 37 to 63 (DETP…QQQQ), 152 to 177 (KHQF…DDEV), 315 to 381 (LPMN…QQLQ), 397 to 472 (QNVP…PLKK), and 515 to 546 (EREA…ESDD). Polar residues predominate over residues 41–58 (ISRNGNDSNINIQPSSVP). The span at 152-162 (KHQFGKSKKNT) shows a compositional bias: basic residues. Residues 318–358 (NNYNNHPGQFQNTPPVMPSGQQPPQQPRTLSLTNGPRYSPQ) are compositionally biased toward polar residues. Low complexity predominate over residues 367–381 (QQISQRQQQQQQQLQ). The span at 397 to 409 (QNVPQGFNPWSPN) shows a compositional bias: polar residues. Positions 417–433 (SMKQPISQSSISSKNNS) are enriched in low complexity. Over residues 434-470 (AYSIPNVQNNSLTTFSPSSPTDATAMPNSTKQGSSPL) the composition is skewed to polar residues. Over residues 515 to 533 (EREALVEEKEKERAEKNTE) the composition is skewed to basic and acidic residues. A phosphoserine mark is found at Ser553, Ser586, and Ser619. Positions 616-639 (EFPSPGKYNSNSDNGEMNTTNEVD) are disordered. The segment covering 622 to 639 (KYNSNSDNGEMNTTNEVD) has biased composition (polar residues). Phosphoserine is present on Ser649. A disordered region spans residues 654–683 (IPERDPKRNVSDATIKRRESDGNGRRLSNV). The span at 655–677 (PERDPKRNVSDATIKRRESDGNG) shows a compositional bias: basic and acidic residues. Residues Ser681, Ser766, and Ser771 each carry the phosphoserine modification.

This is an uncharacterized protein from Saccharomyces cerevisiae (strain ATCC 204508 / S288c) (Baker's yeast).